We begin with the raw amino-acid sequence, 851 residues long: DNA mismatch repair protein MutS (851 aa).

Position 602–609 (602–609 (GPNMSGKS)) interacts with ATP.

It belongs to the DNA mismatch repair MutS family.

Functionally, this protein is involved in the repair of mismatches in DNA. It is possible that it carries out the mismatch recognition step. This protein has a weak ATPase activity. This is DNA mismatch repair protein MutS from Streptococcus pyogenes serotype M6 (strain ATCC BAA-946 / MGAS10394).